We begin with the raw amino-acid sequence, 538 residues long: Endoglucanase 16 (538 aa).

Positions 1–26 (MRWRRVGDVVAVALLLGAAAAAAAAA) are cleaved as a signal peptide. Asp-83 functions as the Nucleophile in the catalytic mechanism. Active-site residues include His-431, Asp-483, and Glu-492. The tract at residues 513–538 (RQESPSTTTTTTATTSSPEMGLSVNR) is disordered. The span at 516–530 (SPSTTTTTTATTSSP) shows a compositional bias: low complexity.

It belongs to the glycosyl hydrolase 9 (cellulase E) family.

Its subcellular location is the secreted. The enzyme catalyses Endohydrolysis of (1-&gt;4)-beta-D-glucosidic linkages in cellulose, lichenin and cereal beta-D-glucans.. In Oryza sativa subsp. japonica (Rice), this protein is Endoglucanase 16.